A 265-amino-acid polypeptide reads, in one-letter code: Mlc titration factor A (265 aa).

His-111, His-148, His-152, and Glu-211 together coordinate Zn(2+).

Belongs to the MtfA family. Interacts with Mlc. Zn(2+) serves as cofactor.

It localises to the cytoplasm. Involved in the modulation of the activity of the glucose-phosphotransferase system (glucose-PTS). Interacts with the transcriptional repressor Mlc, preventing its interaction with DNA and leading to the modulation of expression of genes regulated by Mlc, including ptsG, which encodes the PTS system glucose-specific EIICB component. Its function is as follows. Shows zinc-dependent metallopeptidase activity. The polypeptide is Mlc titration factor A (Escherichia coli O127:H6 (strain E2348/69 / EPEC)).